Consider the following 867-residue polypeptide: Leucine--tRNA ligase (867 aa).

The short motif at 42–52 (PYPSGNLHMGH) is the 'HIGH' region element. The short motif at 625–629 (KMSKS) is the 'KMSKS' region element. Lys-628 is an ATP binding site.

It belongs to the class-I aminoacyl-tRNA synthetase family.

The protein localises to the cytoplasm. The catalysed reaction is tRNA(Leu) + L-leucine + ATP = L-leucyl-tRNA(Leu) + AMP + diphosphate. In Blochmanniella floridana, this protein is Leucine--tRNA ligase.